Reading from the N-terminus, the 808-residue chain is Dynamin-related protein 3A (808 aa).

Positions 1 to 31 (MTIEEVSGETPPSTPPSSSTPSPSSSTTNAA) are disordered. Over residues 16 to 28 (PSSSTPSPSSSTT) the composition is skewed to low complexity. One can recognise a Dynamin-type G domain in the interval 56–330 (TIALPQVVVV…LVQHIKVLLP (275 aa)). A G1 motif region spans residues 66–73 (GSQSSGKS). Position 66–73 (66–73 (GSQSSGKS)) interacts with GTP. Residues 92 to 94 (CTR) form a G2 motif region. The G3 motif stretch occupies residues 172 to 175 (DLPG). Residues 172-176 (DLPGI) and 241-244 (TKLD) each bind GTP. Positions 241-244 (TKLD) are G4 motif. Residues 271–274 (VNRC) are G5 motif. The segment at 548 to 578 (IPHPVARPKDTVEPDRTSSSTSQVKSRSFLG) is disordered. Residues 554–563 (RPKDTVEPDR) are compositionally biased toward basic and acidic residues. Residues 564–575 (TSSSTSQVKSRS) are compositionally biased toward low complexity. A GED domain is found at 670 to 761 (IQITKLLLRS…TLDELPLEAD (92 aa)). A disordered region spans residues 774–808 (LTSSKYSTSSSYSASPSTTRRSRRAGDQHQNGYGF). A compositionally biased stretch (low complexity) spans 775–792 (TSSKYSTSSSYSASPSTT).

It belongs to the TRAFAC class dynamin-like GTPase superfamily. Dynamin/Fzo/YdjA family. In terms of assembly, homooligomer. Interacts with ARC5 on peroxisomes and ELM1 on mitochondria. In terms of tissue distribution, ubiquitous. Preferentially expressed in flowers.

The protein resides in the mitochondrion. It localises to the peroxisome. Its function is as follows. Involved in the control of mitochondrial and peroxisomal division and morphology. In association with PEX11C, PEX11D, PEX11E and FIS1B, is involved in cell cycle-associated constitutive self-replication of preexisting peroxisomes. In Arabidopsis thaliana (Mouse-ear cress), this protein is Dynamin-related protein 3A (DRP3A).